The following is a 666-amino-acid chain: UvrABC system protein B (666 aa).

In terms of domain architecture, Helicase ATP-binding spans 26-183 (DSFQKGAEKV…RKLLHIQYNR (158 aa)). Position 39–46 (39–46 (GVTGSGKT)) interacts with ATP. A Beta-hairpin motif is present at residues 92–115 (YYDYYQPEAYVPSSDTFIEKDSSI). One can recognise a Helicase C-terminal domain in the interval 429–591 (QIEDLLVEIR…ITPLTIRKEV (163 aa)). Residues 625 to 660 (EVLKDKLREEMMKAAKELDFERAAILRDKMLSIQIN) enclose the UVR domain.

Belongs to the UvrB family. As to quaternary structure, forms a heterotetramer with UvrA during the search for lesions. Interacts with UvrC in an incision complex.

It is found in the cytoplasm. Functionally, the UvrABC repair system catalyzes the recognition and processing of DNA lesions. A damage recognition complex composed of 2 UvrA and 2 UvrB subunits scans DNA for abnormalities. Upon binding of the UvrA(2)B(2) complex to a putative damaged site, the DNA wraps around one UvrB monomer. DNA wrap is dependent on ATP binding by UvrB and probably causes local melting of the DNA helix, facilitating insertion of UvrB beta-hairpin between the DNA strands. Then UvrB probes one DNA strand for the presence of a lesion. If a lesion is found the UvrA subunits dissociate and the UvrB-DNA preincision complex is formed. This complex is subsequently bound by UvrC and the second UvrB is released. If no lesion is found, the DNA wraps around the other UvrB subunit that will check the other stand for damage. This chain is UvrABC system protein B, found in Leptospira borgpetersenii serovar Hardjo-bovis (strain JB197).